The sequence spans 162 residues: NADPH-dependent 7-cyano-7-deazaguanine reductase (162 aa).

Catalysis depends on cysteine 53, which acts as the Thioimide intermediate. Catalysis depends on aspartate 60, which acts as the Proton donor. Residues 75–77 and 94–95 contribute to the substrate site; these read VES and HE.

This sequence belongs to the GTP cyclohydrolase I family. QueF type 1 subfamily.

It localises to the cytoplasm. It carries out the reaction 7-aminomethyl-7-carbaguanine + 2 NADP(+) = 7-cyano-7-deazaguanine + 2 NADPH + 3 H(+). Its pathway is tRNA modification; tRNA-queuosine biosynthesis. Catalyzes the NADPH-dependent reduction of 7-cyano-7-deazaguanine (preQ0) to 7-aminomethyl-7-deazaguanine (preQ1). The sequence is that of NADPH-dependent 7-cyano-7-deazaguanine reductase from Exiguobacterium sibiricum (strain DSM 17290 / CCUG 55495 / CIP 109462 / JCM 13490 / 255-15).